Reading from the N-terminus, the 373-residue chain is Putative glutamate--cysteine ligase 2 (373 aa).

The protein belongs to the glutamate--cysteine ligase type 2 family. YbdK subfamily. Homodimer.

It catalyses the reaction L-cysteine + L-glutamate + ATP = gamma-L-glutamyl-L-cysteine + ADP + phosphate + H(+). Its function is as follows. ATP-dependent carboxylate-amine ligase which exhibits weak glutamate--cysteine ligase activity. In Enterobacter sp. (strain 638), this protein is Putative glutamate--cysteine ligase 2.